The sequence spans 244 residues: 6-carboxyhexanoate--CoA ligase (244 aa).

The protein belongs to the BioW family. Homodimer. Requires Mg(2+) as cofactor.

The catalysed reaction is heptanedioate + ATP + CoA = 6-carboxyhexanoyl-CoA + AMP + diphosphate. Its pathway is metabolic intermediate metabolism; pimeloyl-CoA biosynthesis; pimeloyl-CoA from pimelate: step 1/1. Its function is as follows. Catalyzes the transformation of pimelate into pimeloyl-CoA with concomitant hydrolysis of ATP to AMP. This Methanococcus maripaludis (strain C7 / ATCC BAA-1331) protein is 6-carboxyhexanoate--CoA ligase.